The chain runs to 285 residues: tRNA uridine(34) hydroxylase (285 aa).

A Rhodanese domain is found at 130 to 225; that stretch reads RGDDVVFFDG…YGEAFGDTGL (96 aa). The active-site Cysteine persulfide intermediate is Cys185.

It belongs to the TrhO family.

The enzyme catalyses uridine(34) in tRNA + AH2 + O2 = 5-hydroxyuridine(34) in tRNA + A + H2O. Its function is as follows. Catalyzes oxygen-dependent 5-hydroxyuridine (ho5U) modification at position 34 in tRNAs. This Rhodococcus jostii (strain RHA1) protein is tRNA uridine(34) hydroxylase.